Consider the following 314-residue polypeptide: Malate dehydrogenase (314 aa).

NAD(+)-binding positions include 11-16 (GSGNIG) and Asp35. Substrate contacts are provided by Arg84 and Arg90. NAD(+)-binding positions include Asn97 and 120–122 (ITN). Substrate is bound by residues Asn122 and Arg153. The active-site Proton acceptor is the His177.

The protein belongs to the LDH/MDH superfamily. MDH type 3 family.

It catalyses the reaction (S)-malate + NAD(+) = oxaloacetate + NADH + H(+). Functionally, catalyzes the reversible oxidation of malate to oxaloacetate. This Rickettsia felis (strain ATCC VR-1525 / URRWXCal2) (Rickettsia azadi) protein is Malate dehydrogenase.